The primary structure comprises 171 residues: Large ribosomal subunit protein uL10 (171 aa).

Belongs to the universal ribosomal protein uL10 family. In terms of assembly, part of the ribosomal stalk of the 50S ribosomal subunit. The N-terminus interacts with L11 and the large rRNA to form the base of the stalk. The C-terminus forms an elongated spine to which L12 dimers bind in a sequential fashion forming a multimeric L10(L12)X complex.

Forms part of the ribosomal stalk, playing a central role in the interaction of the ribosome with GTP-bound translation factors. This Hyphomonas neptunium (strain ATCC 15444) protein is Large ribosomal subunit protein uL10.